Consider the following 311-residue polypeptide: Aspartate carbamoyltransferase catalytic subunit (311 aa).

Carbamoyl phosphate-binding residues include Arg55 and Thr56. An L-aspartate-binding site is contributed by Lys85. Positions 106, 135, and 138 each coordinate carbamoyl phosphate. Arg168 and Arg230 together coordinate L-aspartate. Carbamoyl phosphate-binding residues include Leu268 and Pro269.

It belongs to the aspartate/ornithine carbamoyltransferase superfamily. ATCase family. In terms of assembly, heterododecamer (2C3:3R2) of six catalytic PyrB chains organized as two trimers (C3), and six regulatory PyrI chains organized as three dimers (R2).

The enzyme catalyses carbamoyl phosphate + L-aspartate = N-carbamoyl-L-aspartate + phosphate + H(+). It participates in pyrimidine metabolism; UMP biosynthesis via de novo pathway; (S)-dihydroorotate from bicarbonate: step 2/3. Its function is as follows. Catalyzes the condensation of carbamoyl phosphate and aspartate to form carbamoyl aspartate and inorganic phosphate, the committed step in the de novo pyrimidine nucleotide biosynthesis pathway. In Yersinia enterocolitica serotype O:8 / biotype 1B (strain NCTC 13174 / 8081), this protein is Aspartate carbamoyltransferase catalytic subunit.